The sequence spans 638 residues: Keratin, type II cytoskeletal 2 oral (638 aa).

The head stretch occupies residues 1–182 (MNRQVCKKSF…DPQIGQVKAQ (182 aa)). 2 positions are modified to omega-N-methylarginine: arginine 85 and arginine 110. Residues 183–218 (EREQIKTLNNKFASFIDKVRFLEQQNKVLETKWELL) form a coil 1A region. The IF rod domain maps to 183–496 (EREQIKTLNN…KLLEGEECRM (314 aa)). The interval 219-237 (QQQTTGSGPSSLEPCFESY) is linker 1. A coil 1B region spans residues 238–329 (ISFLCKQLDS…TLYEMELSQM (92 aa)). A linker 12 region spans residues 330–353 (QSHASDTSVVLSMDNNRCLDLGSI). The coil 2 stretch occupies residues 354-492 (IAEVRAQYEE…ATYRKLLEGE (139 aa)). Positions 493–638 (ECRMSGECQS…TSSSQHSSTK (146 aa)) are tail. Positions 532–638 (SGSGGYKGGS…TSSSQHSSTK (107 aa)) are disordered. Over residues 540–549 (GSSSSSSSGY) the composition is skewed to low complexity. A compositionally biased stretch (gly residues) spans 550-572 (GVSGGSGSGYGGVSSGSTGGRGS). The segment covering 573-583 (SGSYQSSSSGS) has biased composition (low complexity). The residue at position 584 (arginine 584) is an Omega-N-methylarginine. The segment covering 590–608 (SISVSHSGMGSSSGSIQTS) has biased composition (low complexity). Positions 609 to 620 (GGSGYKSGGGGS) are enriched in gly residues. A compositionally biased stretch (low complexity) spans 626–638 (SQTTSSSQHSSTK).

The protein belongs to the intermediate filament family. As to quaternary structure, heterotetramer of two type I and two type II keratins.

In terms of biological role, probably contributes to terminal cornification. The protein is Keratin, type II cytoskeletal 2 oral (KRT76) of Homo sapiens (Human).